Here is a 173-residue protein sequence, read N- to C-terminus: Beta-defensin 129 (173 aa).

An N-terminal signal peptide occupies residues 1-19; the sequence is MKLLFPIFASLMLQYKVNT. 3 disulfides stabilise this stretch: Cys27/Cys53, Cys34/Cys48, and Cys38/Cys54. The interval 144–173 is disordered; it reads STKSNIKESRDSATASPPPAPPPPNTLPTP. Residues 159–173 are compositionally biased toward pro residues; it reads SPPPAPPPPNTLPTP.

The protein belongs to the beta-defensin family.

The protein localises to the secreted. Functionally, has antibacterial activity. The sequence is that of Beta-defensin 129 (DEFB129) from Hylobates lar (Lar gibbon).